The sequence spans 335 residues: Nucleoid-associated protein PSEEN4449 (335 aa).

The protein belongs to the YejK family.

Its subcellular location is the cytoplasm. The protein resides in the nucleoid. The protein is Nucleoid-associated protein PSEEN4449 of Pseudomonas entomophila (strain L48).